Here is a 301-residue protein sequence, read N- to C-terminus: Cell division control protein 2 homolog 1 (301 aa).

Residues 5-297 enclose the Protein kinase domain; sequence YQRLEKIGEG…AAQALEHPYF (293 aa). ATP is bound by residues 11-19 and Lys34; that span reads IGEGSYGVV. Position 15 is a phosphoserine (Ser15). Tyr16 is subject to Phosphotyrosine. The Proton acceptor role is filled by Asp127. Thr160 bears the Phosphothreonine; by CAK mark.

Belongs to the protein kinase superfamily. CMGC Ser/Thr protein kinase family. CDC2/CDKX subfamily. Forms a stable but non-covalent complex with a regulatory subunit and with a cyclin.

The enzyme catalyses L-seryl-[protein] + ATP = O-phospho-L-seryl-[protein] + ADP + H(+). The catalysed reaction is L-threonyl-[protein] + ATP = O-phospho-L-threonyl-[protein] + ADP + H(+). Its activity is regulated as follows. Phosphorylation at Ser-15 or Tyr-16 inactivates the enzyme, while phosphorylation at Thr-160 activates it. Its function is as follows. Probably involved in the control of the cell cycle. The polypeptide is Cell division control protein 2 homolog 1 (CRK1) (Trypanosoma congolense).